Consider the following 188-residue polypeptide: Protein ORFV073 (188 aa).

Interacts with host IKBKG; this interaction inhibits host NF-kappa-B pathway activation.

The protein resides in the host nucleus. Its subcellular location is the host cytoplasm. It is found in the host perinuclear region. The protein localises to the virion. Its function is as follows. Plays a role in the inhibition of the host NF-kappa-B pathway early during infection. Prevents the host RELA subunit from reaching the nucleus and activate transcription. The sequence is that of Protein ORFV073 from Capra hircus (Goat).